A 363-amino-acid chain; its full sequence is NAD kinase 1 (363 aa).

Aspartate 68 functions as the Proton acceptor in the catalytic mechanism. NAD(+)-binding positions include 68-69 (DG), arginine 73, 175-176 (ND), arginine 186, aspartate 205, alanine 240, and glutamine 275.

It belongs to the NAD kinase family. It depends on a divalent metal cation as a cofactor.

Its subcellular location is the cytoplasm. The enzyme catalyses NAD(+) + ATP = ADP + NADP(+) + H(+). In terms of biological role, involved in the regulation of the intracellular balance of NAD and NADP, and is a key enzyme in the biosynthesis of NADP. Catalyzes specifically the phosphorylation on 2'-hydroxyl of the adenosine moiety of NAD to yield NADP. The polypeptide is NAD kinase 1 (Streptomyces coelicolor (strain ATCC BAA-471 / A3(2) / M145)).